The chain runs to 219 residues: Redox-sensing transcriptional repressor Rex (219 aa).

Residues 17–56 (LYYRIFKRFHRENIVKTSSKQIAEAIGIDPATVRRDFSYF) constitute a DNA-binding region (H-T-H motif). Residue 91 to 96 (GVGNIG) coordinates NAD(+).

This sequence belongs to the transcriptional regulatory Rex family. In terms of assembly, homodimer.

The protein resides in the cytoplasm. In terms of biological role, modulates transcription in response to changes in cellular NADH/NAD(+) redox state. The protein is Redox-sensing transcriptional repressor Rex of Streptococcus thermophilus (strain ATCC BAA-491 / LMD-9).